A 957-amino-acid chain; its full sequence is PE-PGRS family protein PE_PGRS3 (957 aa).

One can recognise a PE domain in the interval 4-94 (VIAAPEVIAA…GAYAAAEAAA (91 aa)). The span at 893-925 (CRRQRRADRQRRQRRQRRQSRGHARCRRHRRAA) shows a compositional bias: basic residues. The tract at residues 893 to 957 (CRRQRRADRQ…GISCSPQMMP (65 aa)) is disordered.

Belongs to the mycobacterial PE family. PGRS subfamily. Post-translationally, a cleavage of the protein removes the N-terminal 120-150 residues, immediately upstream the PGRS domain. The exact position of the cleavage site could not be identified.

It localises to the cell outer membrane. The protein localises to the secreted. The protein resides in the cell wall. It is found in the cell surface. The arginine-rich C-terminal region protrudes from the mycobacterial membrane and mediates M.tuberculosis entry into host epithelial cells. May serve as a bridge between mycobacteria and host cells by interacting with specific host phospholipids and extracting them from host cells, for their direct integration or as a source of phosphate, during phases of TB pathogenesis when M.tuberculosis is short of phosphate supply. The protein is PE-PGRS family protein PE_PGRS3 of Mycobacterium tuberculosis (strain ATCC 25618 / H37Rv).